A 299-amino-acid polypeptide reads, in one-letter code: Tyrosine recombinase XerC (299 aa).

Positions 1–85 (MKRQLEAYCA…AVRGLYRYLN (85 aa)) constitute a Core-binding (CB) domain. Residues 106-285 (RLPKVLDTDR…DFQHLAAVYD (180 aa)) enclose the Tyr recombinase domain. Residues Arg146, Lys170, His237, Arg240, and His263 contribute to the active site. The O-(3'-phospho-DNA)-tyrosine intermediate role is filled by Tyr272.

This sequence belongs to the 'phage' integrase family. XerC subfamily. As to quaternary structure, forms a cyclic heterotetrameric complex composed of two molecules of XerC and two molecules of XerD.

Its subcellular location is the cytoplasm. In terms of biological role, site-specific tyrosine recombinase, which acts by catalyzing the cutting and rejoining of the recombining DNA molecules. The XerC-XerD complex is essential to convert dimers of the bacterial chromosome into monomers to permit their segregation at cell division. It also contributes to the segregational stability of plasmids. The protein is Tyrosine recombinase XerC of Pseudomonas putida (strain ATCC 700007 / DSM 6899 / JCM 31910 / BCRC 17059 / LMG 24140 / F1).